A 352-amino-acid polypeptide reads, in one-letter code: Transcription factor RSL2 (352 aa).

Polar residues predominate over residues 160-169 (SVTTTKSLTG). Positions 160 to 277 (SVTTTKSLTG…ASRGAATDPQ (118 aa)) are disordered. Positions 183-192 (KRARVNKRAQ) are enriched in basic residues. Polar residues predominate over residues 223 to 232 (SRQNSSTTFC). Residues 272 to 285 (AATDPQSLYARKRR) are basic motif. Residues 272–321 (AATDPQSLYARKRRERINERLRILQNLVPNGTKVDISTMLEEAVHYVKFL) enclose the bHLH domain. The helix-loop-helix motif stretch occupies residues 286–321 (ERINERLRILQNLVPNGTKVDISTMLEEAVHYVKFL).

In terms of assembly, homodimer. Expressed in roots. Expressed in root epidermal hair cells.

It is found in the nucleus. Its function is as follows. Transcription factor involved in the regulation of root hair elongation. Does not seem to be a direct transcriptional target of RHD6 and RSL1. Involved in the regulation of root hair elongation in response to low phosphate. In Arabidopsis thaliana (Mouse-ear cress), this protein is Transcription factor RSL2.